We begin with the raw amino-acid sequence, 628 residues long: Alpha-L-arabinofuranosidase A (628 aa).

A signal peptide spans 1-25 (MVAFSALSGVSAVSLLLSLVQNAHG). N-linked (GlcNAc...) asparagine glycosylation is found at N36, N51, N74, N152, N171, N260, N359, N440, N493, and N610.

It belongs to the glycosyl hydrolase 51 family.

The enzyme catalyses Hydrolysis of terminal non-reducing alpha-L-arabinofuranoside residues in alpha-L-arabinosides.. The protein operates within glycan metabolism; L-arabinan degradation. Acts only on small linear 1,5-alpha-linked L-arabinofuranosyl oligosaccharides. This is Alpha-L-arabinofuranosidase A (abfA) from Aspergillus niger.